A 384-amino-acid chain; its full sequence is 8-amino-7-oxononanoate synthase (384 aa).

R21 contacts substrate. 108–109 (GF) contacts pyridoxal 5'-phosphate. Residue H133 coordinates substrate. Positions 179, 207, and 233 each coordinate pyridoxal 5'-phosphate. K236 is modified (N6-(pyridoxal phosphate)lysine). T352 contributes to the substrate binding site.

The protein belongs to the class-II pyridoxal-phosphate-dependent aminotransferase family. BioF subfamily. As to quaternary structure, homodimer. It depends on pyridoxal 5'-phosphate as a cofactor.

It carries out the reaction 6-carboxyhexanoyl-[ACP] + L-alanine + H(+) = (8S)-8-amino-7-oxononanoate + holo-[ACP] + CO2. Its pathway is cofactor biosynthesis; biotin biosynthesis. Catalyzes the decarboxylative condensation of pimeloyl-[acyl-carrier protein] and L-alanine to produce 8-amino-7-oxononanoate (AON), [acyl-carrier protein], and carbon dioxide. The sequence is that of 8-amino-7-oxononanoate synthase from Shigella boydii serotype 18 (strain CDC 3083-94 / BS512).